A 330-amino-acid polypeptide reads, in one-letter code: SUMO-activating enzyme subunit 1 (330 aa).

The protein belongs to the ubiquitin-activating E1 family. As to quaternary structure, heterodimer of sae1 and sae2. The complex binds sumo via sae2.

The protein resides in the nucleus. It participates in protein modification; protein sumoylation. Functionally, the dimeric enzyme acts as an E1 ligase for sumo. It mediates ATP-dependent activation of sumo and formation of a thioester with a conserved cysteine residue on sae2. This chain is SUMO-activating enzyme subunit 1 (sae1), found in Dictyostelium discoideum (Social amoeba).